The sequence spans 232 residues: Orotidine 5'-phosphate decarboxylase (232 aa).

Substrate is bound by residues aspartate 11, lysine 33, 61 to 70 (DMKLFDIGAT), threonine 116, arginine 179, glutamine 188, glycine 208, and arginine 209. Catalysis depends on lysine 63, which acts as the Proton donor.

Belongs to the OMP decarboxylase family. Type 1 subfamily. In terms of assembly, homodimer.

The enzyme catalyses orotidine 5'-phosphate + H(+) = UMP + CO2. It participates in pyrimidine metabolism; UMP biosynthesis via de novo pathway; UMP from orotate: step 2/2. Catalyzes the decarboxylation of orotidine 5'-monophosphate (OMP) to uridine 5'-monophosphate (UMP). The protein is Orotidine 5'-phosphate decarboxylase of Cereibacter sphaeroides (strain ATCC 17023 / DSM 158 / JCM 6121 / CCUG 31486 / LMG 2827 / NBRC 12203 / NCIMB 8253 / ATH 2.4.1.) (Rhodobacter sphaeroides).